The following is a 1029-amino-acid chain: Toll-like receptor 9 (1029 aa).

An N-terminal signal peptide occupies residues M1 to A24. Residues Q25–D815 lie on the Extracellular side of the membrane. C34 and C44 are joined by a disulfide. W46–K50 is a DNA binding site. LRR repeat units lie at residues R61 to H84, S86 to C109, V121 to S146, L149 to L165, H166 to V189, L197 to S220, D222 to N241, L242 to C267, L282 to G305, G307 to N331, L332 to L355, L362 to P385, L389 to A412, P414 to V439, C469 to R492, S494 to P517, L518 to E541, P543 to A570, L572 to A596, L598 to C620, L625 to N648, P650 to V673, L674 to P697, T699 to L721, A722 to R745, and T747 to D770. N63 carries N-linked (GlcNAc...) asparagine glycosylation. DNA-binding positions include S71–H76 and K94–P108. A disulfide bridge links C97 with C109. N128 is a glycosylation site (N-linked (GlcNAc...) asparagine). DNA contacts are provided by residues Y131, R151, and Y178 to K180. An intrachain disulfide couples C177 to C183. N-linked (GlcNAc...) asparagine glycosylation occurs at N199. Y207 contributes to the DNA binding site. Residues N209 and N241 are each glycosylated (N-linked (GlcNAc...) asparagine). 2 disulfide bridges follow: C254–C267 and C257–C264. C257 carries S-palmitoyl cysteine lipidation. R261 serves as a coordination point for DNA. A lipid anchor (S-palmitoyl cysteine) is attached at C264. N-linked (GlcNAc...) asparagine glycans are attached at residues N331, N339, and N380. A disulfide bridge connects residues C469 and C498. N-linked (GlcNAc...) asparagine glycosylation is found at N472 and N511. An N-linked (GlcNAc...) asparagine glycan is attached at N565. 2 N-linked (GlcNAc...) asparagine glycosylation sites follow: N667 and N692. N729 is a glycosylation site (N-linked (GlcNAc...) asparagine). 2 cysteine pairs are disulfide-bonded: C762–C788 and C764–C807. A helical membrane pass occupies residues C816 to L836. Topologically, residues C837–E1029 are cytoplasmic. The TIR domain occupies L864–L1009.

It belongs to the Toll-like receptor family. Monomer and homodimer. Exists as a monomer in the absence of unmethylated cytidine-phosphate-guanosine (CpG) ligand. Proteolytic processing of an insertion loop (Z-loop) is required for homodimerization upon binding to the unmethylated CpG ligand leading to its activation. Interacts with MYD88 via their respective TIR domains. Interacts with BTK. Interacts (via transmembrane domain) with UNC93B1. Interacts with CD300LH; the interaction may promote full activation of TLR9-triggered innate responses. Interacts with CNPY3 and HSP90B1; this interaction is required for proper folding in the endoplasmic reticulum. Interacts with SMPDL3B. Interacts with CD82; this interaction is essential for TLR9-dependent myddosome formation in response to CpG stimulation. Activated by proteolytic cleavage of the flexible loop between repeats LRR14 and LRR15 within the ectodomain. Cleavage requires UNC93B1. Proteolytically processed by first removing the majority of the ectodomain by either asparagine endopeptidase (AEP) or a cathepsin followed by a trimming event that is solely cathepsin mediated and required for optimal receptor signaling. In terms of processing, palmitoylated by ZDHHC3 in the Golgi regulates TLR9 trafficking from the Golgi to endosomes. Depalmitoylation by PPT1 controls the release of TLR9 from UNC93B1 in endosomes.

Its subcellular location is the endoplasmic reticulum membrane. The protein localises to the endosome. It localises to the lysosome. The protein resides in the cytoplasmic vesicle. It is found in the phagosome. In terms of biological role, key component of innate and adaptive immunity. TLRs (Toll-like receptors) control host immune response against pathogens through recognition of molecular patterns specific to microorganisms. TLR9 is a nucleotide-sensing TLR which is activated by unmethylated cytidine-phosphate-guanosine (CpG) dinucleotides. Acts via MYD88 and TRAF6, leading to NF-kappa-B activation, cytokine secretion and the inflammatory response. Upon CpG stimulation, induces B-cell proliferation, activation, survival and antibody production. The protein is Toll-like receptor 9 (TLR9) of Ovis aries (Sheep).